Here is an 800-residue protein sequence, read N- to C-terminus: Phenylalanine--tRNA ligase beta subunit (800 aa).

The 116-residue stretch at 39–154 (TKDIKNLVVG…ESQVPGTDAL (116 aa)) folds into the tRNA-binding domain. A B5 domain is found at 408–483 (AFITPIDITA…RIYGYDDIPS (76 aa)). Mg(2+) contacts are provided by aspartate 461, aspartate 467, glutamate 470, and glutamate 471. One can recognise an FDX-ACB domain in the interval 708–800 (PRFPGMSRDI…ALIEQGAVIR (93 aa)).

It belongs to the phenylalanyl-tRNA synthetase beta subunit family. Type 1 subfamily. Tetramer of two alpha and two beta subunits. Mg(2+) is required as a cofactor.

The protein localises to the cytoplasm. The enzyme catalyses tRNA(Phe) + L-phenylalanine + ATP = L-phenylalanyl-tRNA(Phe) + AMP + diphosphate + H(+). The polypeptide is Phenylalanine--tRNA ligase beta subunit (Staphylococcus aureus (strain MRSA252)).